The chain runs to 367 residues: MGESSALQSILYGRGALRLLDQRKLPLEEVYVDVKDSADGWNAIRDMVVRGAPAIAIAAALSLAVEVNDHNFIGTPAEAASFVSKKLEYLVSSRPTAVNLSDAATKLQNLVSTTAETAKDAKSIFQVFIEAAETMLVDDVADNKAIGLHGAEFLQRQLGSSKNISVLTHCNTGSLATAGYGTALGVIRALHSGGVLEKAFCTETRPFNQGSRLTAFELVHDKIPATLIADSAAAALMNNGQVQAVIVGADRIAANGDTANKIGTYNLSIAAKHHGVQFYVAAPVTSIDLSLPSGKQIVIEERSPKELLNSEGGLGKQVAASGISVWNPAFDVTPADLITAIITEKGVITKSDPDGTFDIKSFIECAK.

The active-site Proton donor is Asp-250.

Belongs to the eIF-2B alpha/beta/delta subunits family. MtnA subfamily.

The protein resides in the cytoplasm. Its subcellular location is the nucleus. It carries out the reaction 5-(methylsulfanyl)-alpha-D-ribose 1-phosphate = 5-(methylsulfanyl)-D-ribulose 1-phosphate. The protein operates within amino-acid biosynthesis; L-methionine biosynthesis via salvage pathway; L-methionine from S-methyl-5-thio-alpha-D-ribose 1-phosphate: step 1/6. Catalyzes the interconversion of methylthioribose-1-phosphate (MTR-1-P) into methylthioribulose-1-phosphate (MTRu-1-P). The chain is Methylthioribose-1-phosphate isomerase (IDI2) from Hordeum vulgare (Barley).